A 572-amino-acid chain; its full sequence is Putative lysozyme-like protein (572 aa).

An N-terminal signal peptide occupies residues 1-17; the sequence is MRLLLVLLALIFSVVSA. The span at 145 to 165 shows a compositional bias: low complexity; sequence MSSSGSSSSSGSSGSSSSSSG. Disordered regions lie at residues 145–199, 231–297, 326–388, and 433–469; these read MSSS…HGGG, SSSS…GGGV, ANSV…GERK, and AGSS…GGSG. Positions 166–185 are enriched in gly residues; sequence SSGGGSSGGGSGGGGGGSGL. The span at 231-240 shows a compositional bias: low complexity; the sequence is SSSSADAGSS. The span at 258–282 shows a compositional bias: gly residues; the sequence is STGGTGGSSGSSGGGSGGGGGGSGL. Residues 326 to 358 show a composition bias toward low complexity; the sequence is ANSVSSLAGSMSSSGSSSSSGSSGSSSSSSSSG. Positions 359 to 382 are enriched in gly residues; it reads SSGGSSGGGSSGGGSGGGGGGSGL. Low complexity predominate over residues 433–452; the sequence is AGSSSSSGSSGSSSSSSSSG. Residues 453-469 show a composition bias toward gly residues; sequence SSGGSSGGSSGGGGGSG.

It belongs to the dictyostelium lysozyme family.

The polypeptide is Putative lysozyme-like protein (alyL) (Dictyostelium discoideum (Social amoeba)).